The following is a 70-amino-acid chain: Small ribosomal subunit protein bS21 (70 aa).

It belongs to the bacterial ribosomal protein bS21 family.

The protein is Small ribosomal subunit protein bS21 of Campylobacter curvus (strain 525.92).